Reading from the N-terminus, the 236-residue chain is uncharacterized protein (236 aa).

Residues 3-208 form the DPCK domain; sequence ILGLTGSIAT…PSYFFTLLCL (206 aa). 8-15 lines the ATP pocket; sequence GSIATGKS. Phosphoserine occurs at positions 82 and 86.

The protein belongs to the CoaE family.

The protein resides in the cytoplasm. This is an uncharacterized protein from Schizosaccharomyces pombe (strain 972 / ATCC 24843) (Fission yeast).